The chain runs to 89 residues: Toxin To14 (89 aa).

The N-terminal stretch at 1-19 (MNCLMLIFVVFLLAFGVEC) is a signal peptide. In terms of domain architecture, LCN-type CS-alpha/beta spans 21-85 (KDDYPVDTAK…SPTKTSGRCN (65 aa)). 4 cysteine pairs are disulfide-bonded: Cys-33–Cys-84, Cys-37–Cys-60, Cys-46–Cys-67, and Cys-50–Cys-69.

Expressed by the venom gland.

The protein resides in the secreted. Its function is as follows. Inhibits voltage-gated sodium channels (Nav). In Tityus obscurus (Amazonian scorpion), this protein is Toxin To14.